Consider the following 90-residue polypeptide: Putative regulatory protein NT01CX_2250 (90 aa).

Belongs to the RemA family.

This Clostridium novyi (strain NT) protein is Putative regulatory protein NT01CX_2250.